Here is a 353-residue protein sequence, read N- to C-terminus: uncharacterized protein (353 aa).

An N-terminal signal peptide occupies residues M1–A30.

This is an uncharacterized protein from Escherichia coli O157:H7.